A 68-amino-acid chain; its full sequence is Potassium channel toxin epsilon-KTx 1.2 (68 aa).

Residues Met-1–Ala-26 form the signal peptide. Disulfide bonds link Cys-30–Cys-38, Cys-33–Cys-54, Cys-37–Cys-47, and Cys-42–Cys-52. Tyr-55 bears the Tyrosine amide mark. Positions Arg-57 to Gln-68 are excised as a propeptide.

This sequence belongs to the short scorpion toxin superfamily. Potassium channel inhibitor family. Epsilon-KTx 01 subfamily. As to expression, expressed by the venom gland.

It is found in the secreted. In terms of biological role, potassium channel blocker. At 3 uM, this toxin blocks voltage-gated potassium channels rKv1.2/KCNA2 (5%), hKv1.3/KCNA3 (10%),rKv1.4/KCNA4 (20%), Kv11/hERG (24%), and Shaker-IR (27%). This Tityus serrulatus (Brazilian scorpion) protein is Potassium channel toxin epsilon-KTx 1.2.